A 220-amino-acid polypeptide reads, in one-letter code: Vesicle-associated membrane protein 7 (220 aa).

The Cytoplasmic portion of the chain corresponds to 2-188; that stretch reads AILFAVVARG…ARAMCMKNLK (187 aa). Residues 7-110 form the Longin domain; it reads VVARGTTILA…AMNSEFSSVL (104 aa). The 61-residue stretch at 125 to 185 folds into the v-SNARE coiled-coil homology domain; it reads QVAETQAQVD…RNLARAMCMK (61 aa). The helical; Anchor for type IV membrane protein transmembrane segment at 189-209 threads the bilayer; the sequence is LTIIIIIVSIVIIYIIVSAAC. Residues 210-220 are Vesicular-facing; that stretch reads GGLAWPSCVQK.

This sequence belongs to the synaptobrevin family.

Its subcellular location is the cytoplasmic vesicle. It localises to the secretory vesicle membrane. The protein localises to the golgi apparatus. It is found in the trans-Golgi network membrane. The protein resides in the late endosome membrane. Its subcellular location is the lysosome membrane. It localises to the endoplasmic reticulum membrane. The protein localises to the phagosome membrane. It is found in the synapse. The protein resides in the synaptosome. Involved in the targeting and/or fusion of transport vesicles to their target membrane during transport of proteins from the early endosome to the lysosome. Required for heterotypic fusion of late endosomes with lysosomes and homotypic lysosomal fusion. Required for calcium regulated lysosomal exocytosis. Involved in the export of chylomicrons from the endoplasmic reticulum to the cis Golgi. Required for focal exocytosis of late endocytic vesicles during phagosome formation. The chain is Vesicle-associated membrane protein 7 from Gallus gallus (Chicken).